A 424-amino-acid chain; its full sequence is MARPALLGELLVLLLWTATVGQVAAATEVQPPVTNLSVSVENLCTIIWTWSPPEGASPNCTLRYFSHFDDQQDKKIAPETHRKEELPLDEKICLQVGSQCSANESEKPSPLVKKCISPPEGDPESAVTELKCIWHNLSYMKCSWLPGRNTSPDTHYTLYYWYSSLEKSRQCENIYREGQHIACSFKLTKVEPSFEHQNVQIMVKDNAGKIRPSCKIVSLTSYVKPDPPHIKHLLLKNGALLVQWKNPQNFRSRCLTYEVEVNNTQTDRHNILEVEEDKCQNSESDRNMEGTSCFQLPGVLADAVYTVRVRVKTNKLCFDDNKLWSDWSEAQSIGKEQNSTFYTTMLLTIPVFVAVAVIILLFYLKRLKIIIFPPIPDPGKIFKEMFGDQNDDTLHWKKYDIYEKQSKEETDSVVLIENLKKAAP.

An N-terminal signal peptide occupies residues 1–25 (MARPALLGELLVLLLWTATVGQVAA). The Extracellular portion of the chain corresponds to 26 to 340 (ATEVQPPVTN…QSIGKEQNST (315 aa)). Residues 32–121 (PVTNLSVSVE…VKKCISPPEG (90 aa)) enclose the Fibronectin type-III 1 domain. N-linked (GlcNAc...) asparagine glycans are attached at residues asparagine 35, asparagine 59, asparagine 103, and asparagine 136. Cysteines 44 and 93 form a disulfide. 2 disulfides stabilise this stretch: cysteine 132–cysteine 142 and cysteine 171–cysteine 183. In terms of domain architecture, Fibronectin type-III 2 spans 224–336 (KPDPPHIKHL…WSEAQSIGKE (113 aa)). Asparagine 262 is a glycosylation site (N-linked (GlcNAc...) asparagine). The WSXWS motif motif lies at 324 to 328 (WSDWS). Residue asparagine 338 is glycosylated (N-linked (GlcNAc...) asparagine). A helical membrane pass occupies residues 341-364 (FYTTMLLTIPVFVAVAVIILLFYL). The Cytoplasmic portion of the chain corresponds to 365-424 (KRLKIIIFPPIPDPGKIFKEMFGDQNDDTLHWKKYDIYEKQSKEETDSVVLIENLKKAAP). Positions 371-379 (IFPPIPDPG) match the Box 1 motif motif.

It belongs to the type I cytokine receptor family. Type 5 subfamily. Interleukin-13 receptor is a complex of IL4R, IL13RA1, and possibly other components. Interacts with TRAF3IP1. Interacts with IL4. As to expression, spleen, liver, thymus, heart, lung, kidney, testis, stomach, brain, skin, and colon; but not skeletal muscle.

It is found in the membrane. Binds with low affinity to interleukin-13 (IL13). Together with IL4RA can form a functional receptor for IL13. Also serves as an alternate accessory protein to the common cytokine receptor gamma chain for interleukin-4 (IL4) signaling, but cannot replace the function of IL2RG in allowing enhanced interleukin-2 (IL2) binding activity. The polypeptide is Interleukin-13 receptor subunit alpha-1 (Il13ra1) (Mus musculus (Mouse)).